A 330-amino-acid chain; its full sequence is (11Z)-hexadec-11-enoyl-CoA conjugase (330 aa).

2 helical membrane passes run 37 to 57 (IVVMNVIRFSYLHIAGLYGLY) and 65 to 85 (LATSVFAIVLFFLGNFGITAG). Positions 87–92 (HRLWSH) match the Histidine box-1 motif. Residues 101 to 121 (LEILLMVFNSIAFQNTIFTWV) form a helical membrane-spanning segment. The short motif at 124-128 (HRLHH) is the Histidine box-2 element. 2 helical membrane-spanning segments follow: residues 185–205 (AIPFIGTICFIIPTLAPMYFW) and 216–238 (TVLRYIFSLNGTFLVNSAAHLWG). Positions 264-268 (HNYHH) match the Histidine box-3 motif.

The protein belongs to the fatty acid desaturase type 1 family. Fe(2+) is required as a cofactor. As to expression, highly expressed in the pheromone gland.

It localises to the membrane. The catalysed reaction is an 11,12-saturated fatty acyl-CoA + 2 Fe(II)-[cytochrome b5] + O2 + 2 H(+) = an (11Z)-Delta(11)-fatty acyl-CoA + 2 Fe(III)-[cytochrome b5] + 2 H2O. It carries out the reaction (11Z)-hexadecenoyl-CoA + AH2 + O2 = (10E,12Z)-hexadecadienoyl-CoA + A + 2 H2O. Fatty acid desaturase that catalyzes 2 consecutive steps in the biosynthesis of bombykol, a sex pheromone produced by the moth. First acts as an acyl-CoA Delta(11) desaturase (1) by catalyzing the formation of Delta(11) fatty acyl precursors. Then acts as a (11Z)-hexadec-11-enoyl-CoA conjugase (2) by converting a single cis double bond at position 11 of (11Z)-hexadec-11-enoyl-CoA into conjugated 10 trans and 12 cis double bonds. The sequence is that of (11Z)-hexadec-11-enoyl-CoA conjugase from Bombyx mori (Silk moth).